Here is a 130-residue protein sequence, read N- to C-terminus: Small ribosomal subunit protein uS11c (130 aa).

Belongs to the universal ribosomal protein uS11 family. In terms of assembly, part of the 30S ribosomal subunit.

It localises to the plastid. The protein localises to the chloroplast. In Physcomitrium patens (Spreading-leaved earth moss), this protein is Small ribosomal subunit protein uS11c.